We begin with the raw amino-acid sequence, 407 residues long: Histone acetyltransferase mst2 (407 aa).

Positions 98-372 (PQPTSIRYLY…VNPKLLRWTP (275 aa)) constitute an MYST-type HAT domain. Residues 131–156 (LYICESCLKYMNSDHVLQRHKMKCSW) form a C2HC MYST-type zinc finger. N6-acetyllysine; by autocatalysis is present on Lys-198. Residues 241-243 (ILT), Thr-243, and 248-254 (QRRGYGV) contribute to the acetyl-CoA site. Glu-274 functions as the Proton donor/acceptor in the catalytic mechanism. Acetyl-CoA is bound by residues Ser-278 and Ser-287.

Belongs to the MYST (SAS/MOZ) family. Component of the mst2 complex composed of at least eaf6, mst2, nto1, pdp3, ptf1, ptf2 and tfg3. In terms of processing, autoacetylation at Lys-198 is required for proper function.

The protein localises to the cytoplasm. It is found in the nucleus. The enzyme catalyses L-lysyl-[protein] + acetyl-CoA = N(6)-acetyl-L-lysyl-[protein] + CoA + H(+). In terms of biological role, component of the mst2 complex which is a highly specific H3 lysine 14 (H3K14) acetyltransferase that functions together with gcn5 to regulate global levels of H3K14 acetylation (H3K14ac), critical for DNA damage checkpoint activation. Negatively regulates telomere silencing. Telomere silencing is increased due to histone hypoacetylation and/or an increase in the ratio of methylated histones to acetylated histones. Telomeric histone acetylation contributes to normal meiotic progression. The protein is Histone acetyltransferase mst2 (mst2) of Schizosaccharomyces pombe (strain 972 / ATCC 24843) (Fission yeast).